A 144-amino-acid chain; its full sequence is Fluoride-specific ion channel FluC (144 aa).

Transmembrane regions (helical) follow at residues 7–27, 33–53, 71–91, and 105–125; these read LIVM…SVAA, FIPW…IGFF, LFVM…SLQT, and VNVA…HITA. Na(+)-binding residues include Gly-79 and Thr-82.

The protein belongs to the fluoride channel Fluc/FEX (TC 1.A.43) family.

It localises to the cell inner membrane. It carries out the reaction fluoride(in) = fluoride(out). With respect to regulation, na(+) is not transported, but it plays an essential structural role and its presence is essential for fluoride channel function. In terms of biological role, fluoride-specific ion channel. Important for reducing fluoride concentration in the cell, thus reducing its toxicity. The chain is Fluoride-specific ion channel FluC from Gluconobacter oxydans (strain 621H) (Gluconobacter suboxydans).